The chain runs to 262 residues: Tryptophan synthase alpha chain (262 aa).

Residues Glu-48 and Asp-59 each act as proton acceptor in the active site.

This sequence belongs to the TrpA family. As to quaternary structure, tetramer of two alpha and two beta chains.

The catalysed reaction is (1S,2R)-1-C-(indol-3-yl)glycerol 3-phosphate + L-serine = D-glyceraldehyde 3-phosphate + L-tryptophan + H2O. It participates in amino-acid biosynthesis; L-tryptophan biosynthesis; L-tryptophan from chorismate: step 5/5. Functionally, the alpha subunit is responsible for the aldol cleavage of indoleglycerol phosphate to indole and glyceraldehyde 3-phosphate. The sequence is that of Tryptophan synthase alpha chain from Helicobacter pylori (strain J99 / ATCC 700824) (Campylobacter pylori J99).